Consider the following 285-residue polypeptide: Phospholipid phosphatase 1 (285 aa).

Over 1-6 (MFDKAR) the chain is Cytoplasmic. The short motif at 5–7 (ARL) is the PDZ-binding; involved in localization to the apical cell membrane element. A helical transmembrane segment spans residues 7–27 (LPYVALDVLCVVLAGLPFAIL). Topologically, residues 28 to 53 (TSRHTPFQRGIFCNDESIKYPYKEDT) are extracellular. A helical transmembrane segment spans residues 54–74 (IPYALLGGIMIPFSIVVMIIG). Residues 75–94 (ETLSVYCNLLHSNSFIRNNY) lie on the Cytoplasmic side of the membrane. The chain crosses the membrane as a helical span at residues 95-115 (IATIYKSIGTFLFGAAASQSL). Over 116–165 (TDIAKYSIGRLRPHFLSVCDPDWSKVNCSDGYIEYYVCRGNAEKVKEGRL) the chain is Extracellular. The interval 120 to 128 (KYSIGRLRP) is phosphatase sequence motif I. N142 carries an N-linked (GlcNAc...) asparagine glycan. A helical membrane pass occupies residues 166–186 (SFYSGHSSFSMYCMVFVALYL). Residues 168–171 (YSGH) are phosphatase sequence motif II. The active-site Proton donors is the H171. Residues 187 to 199 (QARMKGDWARLLR) are Cytoplasmic-facing. A helical transmembrane segment spans residues 200-220 (PTLQFGLVAASIYVGLSRISD). Residues 216–227 (SRISDYKHHWSD) are phosphatase sequence motif III. Residues 221–229 (YKHHWSDVL) are Extracellular-facing. H223 acts as the Nucleophile in catalysis. A helical membrane pass occupies residues 230–250 (TGLIQGAIVAILVAVYVSDFF). The Cytoplasmic segment spans residues 251 to 285 (KARNSPFQERKEEDSHTTLHETPTAGNHYRSNHQP). Positions 260–269 (RKEEDSHTTL) are enriched in basic and acidic residues. Positions 260 to 285 (RKEEDSHTTLHETPTAGNHYRSNHQP) are disordered.

It belongs to the PA-phosphatase related phosphoesterase family. As to quaternary structure, forms functional homodimers and homooligomers that are not required for substrate recognition and catalytic activity. Can also form heterooligomers with PLPP2 and PLPP3. N-glycosylated. N-linked sugars are of the complex type. N-glycosylation is not required for the phosphatase activity.

The protein localises to the cell membrane. The protein resides in the apical cell membrane. It is found in the membrane raft. It localises to the membrane. Its subcellular location is the caveola. The enzyme catalyses a 1,2-diacyl-sn-glycero-3-phosphate + H2O = a 1,2-diacyl-sn-glycerol + phosphate. The catalysed reaction is 1,2-dihexadecanoyl-sn-glycero-3-phosphate + H2O = 1,2-dihexadecanoyl-sn-glycerol + phosphate. It catalyses the reaction 1,2-di-(9Z-octadecenoyl)-sn-glycero-3-phosphate + H2O = 1,2-di-(9Z-octadecenoyl)-sn-glycerol + phosphate. It carries out the reaction a monoacyl-sn-glycero-3-phosphate + H2O = a monoacylglycerol + phosphate. The enzyme catalyses (9Z)-octadecenoyl-sn-glycero-3-phosphate + H2O = (9Z-octadecenoyl)-glycerol + phosphate. The catalysed reaction is a 1-acyl-sn-glycero-3-phosphate + H2O = a 1-acyl-sn-glycerol + phosphate. It catalyses the reaction 1-(9Z-octadecenoyl)-sn-glycero-3-phosphate + H2O = 1-(9Z-octadecenoyl)-sn-glycerol + phosphate. It carries out the reaction a 1,2-diacyl-sn-glycerol 3-diphosphate + H2O = a 1,2-diacyl-sn-glycero-3-phosphate + phosphate + H(+). The enzyme catalyses sphing-4-enine 1-phosphate + H2O = sphing-4-enine + phosphate. The catalysed reaction is an N-acylsphing-4-enine 1-phosphate + H2O = an N-acylsphing-4-enine + phosphate. It catalyses the reaction N-(octanoyl)-sphing-4-enine-1-phosphate + H2O = N-octanoylsphing-4-enine + phosphate. It carries out the reaction N-(9Z-octadecenoyl)-ethanolamine phosphate + H2O = N-(9Z-octadecenoyl) ethanolamine + phosphate. The enzyme catalyses 1-hexadecanoyl-2-(9Z-octadecenoyl)-sn-glycero-3-phosphate + H2O = 1-hexadecanoyl-2-(9Z-octadecenoyl)-sn-glycerol + phosphate. The protein operates within lipid metabolism; phospholipid metabolism. With respect to regulation, magnesium-independent phospholipid phosphatase. Insensitive to N-ethylmaleimide. Magnesium-independent phospholipid phosphatase of the plasma membrane that catalyzes the dephosphorylation of a variety of glycerolipid and sphingolipid phosphate esters including phosphatidate/PA, lysophosphatidate/LPA, diacylglycerol pyrophosphate/DGPP, sphingosine 1-phosphate/S1P and ceramide 1-phosphate/C1P. Also acts on N-oleoyl ethanolamine phosphate/N-(9Z-octadecenoyl)-ethanolamine phosphate, a potential physiological compound. Through its extracellular phosphatase activity allows both the hydrolysis and the cellular uptake of these bioactive lipid mediators from the milieu, regulating signal transduction in different cellular processes. It is for instance essential for the extracellular hydrolysis of S1P and subsequent conversion into intracellular S1P. Involved in the regulation of inflammation, platelets activation, cell proliferation and migration among other processes. May also have an intracellular activity to regulate phospholipid-mediated signaling pathways. The sequence is that of Phospholipid phosphatase 1 from Cavia porcellus (Guinea pig).